Here is a 243-residue protein sequence, read N- to C-terminus: Ubiquinone/menaquinone biosynthesis C-methyltransferase UbiE (243 aa).

S-adenosyl-L-methionine contacts are provided by residues Thr69, Asp90, and 116 to 117 (DA).

Belongs to the class I-like SAM-binding methyltransferase superfamily. MenG/UbiE family.

The enzyme catalyses a 2-demethylmenaquinol + S-adenosyl-L-methionine = a menaquinol + S-adenosyl-L-homocysteine + H(+). The catalysed reaction is a 2-methoxy-6-(all-trans-polyprenyl)benzene-1,4-diol + S-adenosyl-L-methionine = a 5-methoxy-2-methyl-3-(all-trans-polyprenyl)benzene-1,4-diol + S-adenosyl-L-homocysteine + H(+). Its pathway is quinol/quinone metabolism; menaquinone biosynthesis; menaquinol from 1,4-dihydroxy-2-naphthoate: step 2/2. The protein operates within cofactor biosynthesis; ubiquinone biosynthesis. In terms of biological role, methyltransferase required for the conversion of demethylmenaquinol (DMKH2) to menaquinol (MKH2) and the conversion of 2-polyprenyl-6-methoxy-1,4-benzoquinol (DDMQH2) to 2-polyprenyl-3-methyl-6-methoxy-1,4-benzoquinol (DMQH2). The protein is Ubiquinone/menaquinone biosynthesis C-methyltransferase UbiE of Paraburkholderia xenovorans (strain LB400).